The sequence spans 484 residues: Crt homolog 2 (484 aa).

At 1–57 (MSEEKLPLLSPLNENDIENDYKDENLKSDLDKLSNVKKQSIIQRFKDYLKNSISKQT) the chain is on the cytoplasmic side. Residues 58–78 (ATVLVYVVLYILSGVINSLLL) form a helical membrane-spanning segment. Over 79–94 (KKVMNVFTNYGFFLNQ) the chain is Vacuolar. Residues 95-115 (LTNYGYVPIFGAIVLYKILFT) form a helical membrane-spanning segment. Over 116–128 (NDIPKDTRSFPQW) the chain is Cytoplasmic. Residues 129-149 (KFVIMGALDAVTGYFVVIGGI) traverse the membrane as a helical segment. Residues 150 to 154 (KTTGP) are Vacuolar-facing. The chain crosses the membrane as a helical span at residues 155 to 175 (LQQLLNQSVIPFTMLLSFIFL). Residues 176-178 (KER) are Cytoplasmic-facing. The chain crosses the membrane as a helical span at residues 179 to 199 (YSLIQLGGALIIIGGVVVSLI). The Vacuolar segment spans residues 200 to 210 (PSLTGGNTSGN). Residue N206 is glycosylated (N-linked (GlcNAc...) asparagine). A helical transmembrane segment spans residues 211 to 231 (MLFYNFFYLISMIPYAFSNVY). The Cytoplasmic portion of the chain corresponds to 232–244 (KAIGFSTVEDMDV). The helical transmembrane segment at 245–265 (WYLQYFDALYQSLVGTVLFPI) threads the bilayer. Over 266-328 (NNWLPPPSDM…LGCDNCHGAW (63 aa)) the chain is Vacuolar. The N-linked (GlcNAc...) asparagine glycan is linked to N302. A helical membrane pass occupies residues 329-349 (VVVLIYMAVNVLYNVFILLVL). At 350 to 355 (KHAGAT) the chain is on the cytoplasmic side. The helical transmembrane segment at 356–378 (VFSIANTLRLPLTNIAFSFKFIM) threads the bilayer. Topologically, residues 379–382 (GSDS) are vacuolar. A helical transmembrane segment spans residues 383–403 (NPFSGLSVAGLCIILLGLGGY). The Cytoplasmic segment spans residues 404–484 (RVGSMIKQKK…RNQNSIYGDQ (81 aa)).

Belongs to the CRT-like transporter family.

The protein localises to the vacuole membrane. In terms of biological role, nutrient transporter. Involved in maintaining the osmotic homeostasis of the digestive vacuole. This is Crt homolog 2 (crtp2) from Dictyostelium discoideum (Social amoeba).